Reading from the N-terminus, the 104-residue chain is Translation initiation factor 1A (104 aa).

The span at 1–14 shows a compositional bias: low complexity; the sequence is MRGQQTPPQQPTRV. The segment at 1–20 is disordered; the sequence is MRGQQTPPQQPTRVRTPREN. The 76-residue stretch at 12 to 87 folds into the S1-like domain; sequence TRVRTPRENE…EKCDVIWRYT (76 aa).

It belongs to the eIF-1A family.

Its function is as follows. Seems to be required for maximal rate of protein biosynthesis. Enhances ribosome dissociation into subunits and stabilizes the binding of the initiator Met-tRNA(I) to 40 S ribosomal subunits. This chain is Translation initiation factor 1A, found in Methanococcus maripaludis (strain DSM 14266 / JCM 13030 / NBRC 101832 / S2 / LL).